Reading from the N-terminus, the 148-residue chain is uncharacterized protein (148 aa).

This is an uncharacterized protein from Bacillus subtilis (strain 168).